The primary structure comprises 210 residues: PEP-dependent dihydroxyacetone kinase, ADP-binding subunit DhaL (210 aa).

Positions 6–206 (TQIVNWLTRC…VMFMMQMLAL (201 aa)) constitute a DhaL domain. Mg(2+) contacts are provided by D30, D35, and D37. ADP contacts are provided by residues 38 to 41 (HGLN), 79 to 80 (AS), G121, M130, R178, and 191 to 193 (DPG).

Homodimer. The dihydroxyacetone kinase complex is composed of a homodimer of DhaM, a homodimer of DhaK and the subunit DhaL. DhaL also forms a complex with DhaR. Requires Mg(2+) as cofactor.

It is found in the cytoplasm. The enzyme catalyses dihydroxyacetone + phosphoenolpyruvate = dihydroxyacetone phosphate + pyruvate. Its pathway is polyol metabolism; glycerol degradation. ADP-binding subunit of the dihydroxyacetone kinase, which is responsible for the phosphoenolpyruvate (PEP)-dependent phosphorylation of dihydroxyacetone. DhaL-ADP is converted to DhaL-ATP via a phosphoryl group transfer from DhaM and transmits it to dihydroxyacetone bound to DhaK. DhaL also acts as coactivator of the transcription activator DhaR by binding to the sensor domain of DhaR. In the presence of dihydroxyacetone, DhaL-ADP displaces DhaK and stimulates DhaR activity. In the absence of dihydroxyacetone, DhaL-ADP is converted by the PTS to DhaL-ATP, which does not bind to DhaR. The protein is PEP-dependent dihydroxyacetone kinase, ADP-binding subunit DhaL of Escherichia coli (strain K12).